A 276-amino-acid chain; its full sequence is Putative pyridoxine kinase (276 aa).

N139 is a binding site for ATP. E142 provides a ligand contact to Mg(2+). Residues 176-180, D188, G213, and K238 each bind ATP; that span reads KGGKA.

It belongs to the ThiD family.

It catalyses the reaction pyridoxal + ATP = pyridoxal 5'-phosphate + ADP + H(+). Phosphorylates B6 vitamers; functions in a salvage pathway. Uses pyridoxal, pyridoxine, and pyridoxamine as substrates. The sequence is that of Putative pyridoxine kinase (pdxK) from Staphylococcus aureus (strain COL).